The following is a 165-amino-acid chain: Shikimate kinase (165 aa).

11–16 lines the ATP pocket; the sequence is GAGKTT. Thr15 contacts Mg(2+). Positions 33, 57, and 78 each coordinate substrate. Arg116 lines the ATP pocket. Arg134 is a substrate binding site.

It belongs to the shikimate kinase family. Monomer. Requires Mg(2+) as cofactor.

The protein resides in the cytoplasm. The enzyme catalyses shikimate + ATP = 3-phosphoshikimate + ADP + H(+). It functions in the pathway metabolic intermediate biosynthesis; chorismate biosynthesis; chorismate from D-erythrose 4-phosphate and phosphoenolpyruvate: step 5/7. Its function is as follows. Catalyzes the specific phosphorylation of the 3-hydroxyl group of shikimic acid using ATP as a cosubstrate. This is Shikimate kinase from Bacillus cereus (strain AH187).